A 351-amino-acid chain; its full sequence is MAVPAAAMGPSALGQSGPGSMAPWCSVSSGPSRYVLGMQELFRGHSKTREFLAHSAKVHSVAWSCDGRRLASGSFDKTASVFLLEKDRLVKENNYRGHGDSVDQLCWHPSNPDLFVTASGDKTIRIWDVRTTKCIATVNTKGENINICWSPDGQTIAVGNKDDVVTFIDAKTHRSKAEEQFKFEVNEISWNNDNNMFFLTNGNGCINILSYPELKPVQSINAHPSNCICIKFDPMGKYFATGSADALVSLWDVDELVCVRCFSRLDWPVRTLSFSHDGKMLASASEDHFIDIAEVETGDKLWEVQCESPTFTVAWHPKRPLLAFACDDKDGKYDSSREAGTVKLFGLPNDS.

The interval Met-1–Ser-20 is disordered. At Ala-2 the chain carries N-acetylalanine. 6 WD repeats span residues Ala-53 to Asn-94, Gly-97 to Thr-137, Asn-139 to Glu-178, Gln-180 to Asn-221, Ala-222 to Cys-261, and Arg-264 to Glu-303.

It belongs to the THOC3 family. In terms of assembly, component of the THO subcomplex, which is composed of THOC1, THOC2, THOC3, THOC5, THOC6 and THOC7. The THO subcomplex interacts with DDX39B to form the THO-DDX39B complex which multimerizes into a 28-subunit tetrameric assembly. Component of the transcription/export (TREX) complex at least composed of ALYREF/THOC4, DDX39B, SARNP/CIP29, CHTOP and the THO subcomplex; in the complex interacts with THOC2. TREX seems to have a dynamic structure involving ATP-dependent remodeling.

Its subcellular location is the nucleus. It is found in the nucleus speckle. In terms of biological role, component of the THO subcomplex of the TREX complex which is thought to couple mRNA transcription, processing and nuclear export, and which specifically associates with spliced mRNA and not with unspliced pre-mRNA. Required for efficient export of polyadenylated RNA and spliced mRNA. The THOC1-THOC2-THOC3 core complex alone is sufficient to bind export factor NXF1-NXT1 and promote ATPase activity of DDX39B. TREX is recruited to spliced mRNAs by a transcription-independent mechanism, binds to mRNA upstream of the exon-junction complex (EJC) and is recruited in a splicing- and cap-dependent manner to a region near the 5' end of the mRNA where it functions in mRNA export to the cytoplasm via the TAP/NXF1 pathway. (Microbial infection) The TREX complex is essential for the export of Kaposi's sarcoma-associated herpesvirus (KSHV) intronless mRNAs and infectious virus production. The chain is THO complex subunit 3 (THOC3) from Homo sapiens (Human).